Consider the following 463-residue polypeptide: Probable Xaa-Pro aminopeptidase PEPP (463 aa).

The Mn(2+) site is built by D259, D270, E393, and E433.

The protein belongs to the peptidase M24B family. Requires Mn(2+) as cofactor.

It catalyses the reaction Release of any N-terminal amino acid, including proline, that is linked to proline, even from a dipeptide or tripeptide.. Functionally, catalyzes the removal of a penultimate prolyl residue from the N-termini of peptides. The protein is Probable Xaa-Pro aminopeptidase PEPP (PEPP) of Phaeosphaeria nodorum (strain SN15 / ATCC MYA-4574 / FGSC 10173) (Glume blotch fungus).